Here is a 35-residue protein sequence, read N- to C-terminus: Endochitinase 2 (35 aa).

It belongs to the glycosyl hydrolase 19 family. Chitinase class I subfamily.

It carries out the reaction Random endo-hydrolysis of N-acetyl-beta-D-glucosaminide (1-&gt;4)-beta-linkages in chitin and chitodextrins.. In terms of biological role, defense against chitin-containing fungal pathogens. The sequence is that of Endochitinase 2 from Capsicum chinense (Scotch bonnet).